The primary structure comprises 54 residues: uncharacterized protein (54 aa).

Residues 1-38 (MFPNSNGPNKMKALVAPSNSSTTSKTNNNNLPPNGRSS) are disordered. Residues 17–38 (PSNSSTTSKTNNNNLPPNGRSS) show a composition bias toward low complexity.

This is an uncharacterized protein from Dictyostelium discoideum (Social amoeba).